We begin with the raw amino-acid sequence, 65 residues long: U15-hexatoxin-Mg1b (65 aa).

Post-translationally, contains 4 disulfide bonds. Expressed by the venom gland.

The protein resides in the secreted. In terms of biological role, in vivo, intrathorax injection into crickets causes death. This is U15-hexatoxin-Mg1b from Macrothele gigas (Japanese funnel web spider).